The chain runs to 502 residues: Glucose-6-phosphate isomerase (502 aa).

Glutamate 331 serves as the catalytic Proton donor. Residues histidine 362 and lysine 471 contribute to the active site.

It belongs to the GPI family.

It is found in the cytoplasm. The enzyme catalyses alpha-D-glucose 6-phosphate = beta-D-fructose 6-phosphate. Its pathway is carbohydrate biosynthesis; gluconeogenesis. The protein operates within carbohydrate degradation; glycolysis; D-glyceraldehyde 3-phosphate and glycerone phosphate from D-glucose: step 2/4. Its function is as follows. Catalyzes the reversible isomerization of glucose-6-phosphate to fructose-6-phosphate. This chain is Glucose-6-phosphate isomerase, found in Xylella fastidiosa (strain 9a5c).